The sequence spans 261 residues: 1-(5-phosphoribosyl)-5-[(5-phosphoribosylamino)methylideneamino] imidazole-4-carboxamide isomerase (261 aa).

The active-site Proton acceptor is the aspartate 8. Aspartate 130 serves as the catalytic Proton donor.

Belongs to the HisA/HisF family.

Its subcellular location is the cytoplasm. It carries out the reaction 1-(5-phospho-beta-D-ribosyl)-5-[(5-phospho-beta-D-ribosylamino)methylideneamino]imidazole-4-carboxamide = 5-[(5-phospho-1-deoxy-D-ribulos-1-ylimino)methylamino]-1-(5-phospho-beta-D-ribosyl)imidazole-4-carboxamide. Its pathway is amino-acid biosynthesis; L-histidine biosynthesis; L-histidine from 5-phospho-alpha-D-ribose 1-diphosphate: step 4/9. The chain is 1-(5-phosphoribosyl)-5-[(5-phosphoribosylamino)methylideneamino] imidazole-4-carboxamide isomerase from Prosthecochloris aestuarii (strain DSM 271 / SK 413).